Consider the following 250-residue polypeptide: Ubiquinone/menaquinone biosynthesis C-methyltransferase UbiE (250 aa).

Residues T73, D94, and 122-123 (DA) contribute to the S-adenosyl-L-methionine site.

This sequence belongs to the class I-like SAM-binding methyltransferase superfamily. MenG/UbiE family.

It carries out the reaction a 2-demethylmenaquinol + S-adenosyl-L-methionine = a menaquinol + S-adenosyl-L-homocysteine + H(+). The enzyme catalyses a 2-methoxy-6-(all-trans-polyprenyl)benzene-1,4-diol + S-adenosyl-L-methionine = a 5-methoxy-2-methyl-3-(all-trans-polyprenyl)benzene-1,4-diol + S-adenosyl-L-homocysteine + H(+). It functions in the pathway quinol/quinone metabolism; menaquinone biosynthesis; menaquinol from 1,4-dihydroxy-2-naphthoate: step 2/2. It participates in cofactor biosynthesis; ubiquinone biosynthesis. Its function is as follows. Methyltransferase required for the conversion of demethylmenaquinol (DMKH2) to menaquinol (MKH2) and the conversion of 2-polyprenyl-6-methoxy-1,4-benzoquinol (DDMQH2) to 2-polyprenyl-3-methyl-6-methoxy-1,4-benzoquinol (DMQH2). In Coxiella burnetii (strain RSA 493 / Nine Mile phase I), this protein is Ubiquinone/menaquinone biosynthesis C-methyltransferase UbiE.